The chain runs to 82 residues: U10-myrmicitoxin-Mri1c (82 aa).

Positions 1-26 (MRLSYVSLTLAIIFVMAIVHAPETEA) are cleaved as a signal peptide. Residues 27-52 (KAYPEADAVGEASAVGEADAVGVADP) constitute a propeptide that is removed on maturation. The residue at position 81 (Ile-81) is an Isoleucine amide.

It belongs to the formicidae venom precursor-01 superfamily. Expressed by the venom gland.

It localises to the secreted. In terms of biological role, induces paralysis 5 minutes after injection into blowflies (L.caesar). In most cases is not lethal 24 hours after injection, but paralysis is irreversible. May have antimicrobial properties, like most ant linear peptides. This chain is U10-myrmicitoxin-Mri1c, found in Manica rubida (European giant red ant).